The primary structure comprises 387 residues: Probable serine protease FE772_23060 (387 aa).

The protein belongs to the peptidase S1 family.

Possibly a dedicated protease for substrate gasdermin bGSDM; cleaves the bGSDM precursor, releasing the pore-forming moiety, which integrates into the membrane and triggers cell death. Involved in defense against bacteriophages. When this probable 4 gene operon (bGSDM-FE772_23060-FE772_23065-FE772_23070) is inserted into E.coli it provides nearly 100-fold protection against phages T5 and T6 and about 8-fold against phage T4. The operon without bGSDM no longer protects against phage. This chain is Probable serine protease FE772_23060, found in Lysobacter enzymogenes.